The sequence spans 131 residues: Holo-[acyl-carrier-protein] synthase (131 aa).

Mg(2+) is bound by residues D8 and E59.

The protein belongs to the P-Pant transferase superfamily. AcpS family. Requires Mg(2+) as cofactor.

It localises to the cytoplasm. The catalysed reaction is apo-[ACP] + CoA = holo-[ACP] + adenosine 3',5'-bisphosphate + H(+). Functionally, transfers the 4'-phosphopantetheine moiety from coenzyme A to a Ser of acyl-carrier-protein. This chain is Holo-[acyl-carrier-protein] synthase, found in Rickettsia rickettsii (strain Sheila Smith).